The sequence spans 1037 residues: Importin-8 (1037 aa).

Positions 22-102 constitute an Importin N-terminal domain; the sequence is AENELNQSYK…RDNIVEGIIR (81 aa). Residues 886–895 are compositionally biased toward basic and acidic residues; sequence DRSKAEKADM. The disordered stretch occupies residues 886–934; the sequence is DRSKAEKADMEENEEISSDEEETNVTAQAMQSNNGRGEDEEEEDDDWDE. The segment covering 896 to 908 has biased composition (acidic residues); it reads EENEEISSDEEET. 2 positions are modified to phosphoserine: Ser902 and Ser903. Residues 909-920 are compositionally biased toward polar residues; the sequence is NVTAQAMQSNNG. Acidic residues predominate over residues 923-934; the sequence is EDEEEEDDDWDE.

It belongs to the importin beta family. Forms a heterodimer with KPNB1. Interacts with SRP19. Interacts with RPL23A. Binds directly to nuclear pore complexes. Interacts with LRPPRC; the interaction occurs when LRPPRC is in its RNA-free form and promotes import of LRPPRC to the nucleus to allow for EIF4E-mediated export of mRNAS from the nucleus to the cytoplasm.

The protein resides in the cytoplasm. It localises to the nucleus. Functionally, involved in nuclear protein import, either by acting as autonomous nuclear transport receptor or as an adapter-like protein in association with the importin-beta subunit KPNB1. Acting autonomously, may serve as receptor for nuclear localization signals (NLS) and promote translocation of import substrates through the nuclear pore complex (NPC) by an energy requiring, Ran-dependent mechanism. At the nucleoplasmic side of the NPC, Ran binds to importin, the importin/substrate complex dissociates and importin is re-exported from the nucleus to the cytoplasm where GTP hydrolysis releases Ran. The directionality of nuclear import is thought to be conferred by an asymmetric distribution of the GTP- and GDP-bound forms of Ran between the cytoplasm and nucleus. In vitro mediates the nuclear import of the signal recognition particle protein SRP19. May also be involved in cytoplasm-to-nucleus shuttling of a broad spectrum of other cargos, including Argonaute-microRNAs complexes, the JUN protein, RELA/NF-kappa-B p65 subunit, the translation initiation factor EIF4E and a set of receptor-activated mothers against decapentaplegic homolog (SMAD) transcription factors that play a critical role downstream of the large family of transforming growth factor beta and bone morphogenetic protein (BMP) cytokines. The protein is Importin-8 (IPO8) of Homo sapiens (Human).